The primary structure comprises 205 residues: Probable nicotinate-nucleotide adenylyltransferase (205 aa).

It belongs to the NadD family.

The enzyme catalyses nicotinate beta-D-ribonucleotide + ATP + H(+) = deamido-NAD(+) + diphosphate. It functions in the pathway cofactor biosynthesis; NAD(+) biosynthesis; deamido-NAD(+) from nicotinate D-ribonucleotide: step 1/1. Its function is as follows. Catalyzes the reversible adenylation of nicotinate mononucleotide (NaMN) to nicotinic acid adenine dinucleotide (NaAD). The sequence is that of Probable nicotinate-nucleotide adenylyltransferase from Arthrobacter sp. (strain FB24).